Reading from the N-terminus, the 362-residue chain is Outer membrane porin protein OmpD (362 aa).

The first 21 residues, 1–21 (MKLKLVAVAVTSLLAAGVVNA), serve as a signal peptide directing secretion.

It belongs to the Gram-negative porin family. As to quaternary structure, homotrimer.

Its subcellular location is the cell outer membrane. Functionally, forms pores that allow passive diffusion of small molecules across the outer membrane. This chain is Outer membrane porin protein OmpD (ompD), found in Salmonella choleraesuis (strain SC-B67).